Here is a 1033-residue protein sequence, read N- to C-terminus: Isoleucine--tRNA ligase 2 (1033 aa).

The 'HIGH' region signature appears at 47–57 (PTANGLPHVGH). The 'KMSKS' region motif lies at 590–594 (KMSKS). Residue lysine 593 coordinates ATP.

The protein belongs to the class-I aminoacyl-tRNA synthetase family. IleS type 2 subfamily. As to quaternary structure, monomer. The cofactor is Zn(2+).

The protein localises to the cytoplasm. The catalysed reaction is tRNA(Ile) + L-isoleucine + ATP = L-isoleucyl-tRNA(Ile) + AMP + diphosphate. Catalyzes the attachment of isoleucine to tRNA(Ile). As IleRS can inadvertently accommodate and process structurally similar amino acids such as valine, to avoid such errors it has two additional distinct tRNA(Ile)-dependent editing activities. One activity is designated as 'pretransfer' editing and involves the hydrolysis of activated Val-AMP. The other activity is designated 'posttransfer' editing and involves deacylation of mischarged Val-tRNA(Ile). In Bacillus anthracis, this protein is Isoleucine--tRNA ligase 2.